An 889-amino-acid polypeptide reads, in one-letter code: Protein translocase subunit SecA (889 aa).

ATP contacts are provided by residues Q87, 105–109, and D494; that span reads GEGKT. The tract at residues 823–889 is disordered; sequence ESLRPEEADL…RMDKDTKGKR (67 aa). The segment covering 867–889 has biased composition (basic and acidic residues); it reads PRDDRPMNREERRRMDKDTKGKR.

The protein belongs to the SecA family. As to quaternary structure, monomer and homodimer. Part of the essential Sec protein translocation apparatus which comprises SecA, SecYEG and auxiliary proteins SecDF-YajC and YidC.

Its subcellular location is the cell inner membrane. It localises to the cytoplasm. It carries out the reaction ATP + H2O + cellular proteinSide 1 = ADP + phosphate + cellular proteinSide 2.. Its function is as follows. Part of the Sec protein translocase complex. Interacts with the SecYEG preprotein conducting channel. Has a central role in coupling the hydrolysis of ATP to the transfer of proteins into and across the cell membrane, serving as an ATP-driven molecular motor driving the stepwise translocation of polypeptide chains across the membrane. This is Protein translocase subunit SecA from Bdellovibrio bacteriovorus (strain ATCC 15356 / DSM 50701 / NCIMB 9529 / HD100).